Here is a 172-residue protein sequence, read N- to C-terminus: MVDKRESYTKEDLLASGRGELFGAKGPQLPAPNMLMMDRVIKMTETGGNYDKGYVEAELDINPDLWFFGCHFIGDPVMPGCLGLDAMWQLVGFYLGWLGGEGKGRALGVGEVKFTGQVLPTAKKVTYRIHFKRIVNRRLIMGLADGEVLVDDRLIYTANDLKVGLFQDTSAF.

His-71 is a catalytic residue.

It belongs to the thioester dehydratase family. FabA subfamily. Homodimer.

The protein resides in the cytoplasm. The catalysed reaction is a (3R)-hydroxyacyl-[ACP] = a (2E)-enoyl-[ACP] + H2O. It catalyses the reaction (3R)-hydroxydecanoyl-[ACP] = (2E)-decenoyl-[ACP] + H2O. It carries out the reaction (2E)-decenoyl-[ACP] = (3Z)-decenoyl-[ACP]. The protein operates within lipid metabolism; fatty acid biosynthesis. Its function is as follows. Necessary for the introduction of cis unsaturation into fatty acids. Catalyzes the dehydration of (3R)-3-hydroxydecanoyl-ACP to E-(2)-decenoyl-ACP and then its isomerization to Z-(3)-decenoyl-ACP. Can catalyze the dehydratase reaction for beta-hydroxyacyl-ACPs with saturated chain lengths up to 16:0, being most active on intermediate chain length. This chain is 3-hydroxydecanoyl-[acyl-carrier-protein] dehydratase, found in Klebsiella pneumoniae subsp. pneumoniae (strain ATCC 700721 / MGH 78578).